A 299-amino-acid polypeptide reads, in one-letter code: 4-hydroxybenzoate octaprenyltransferase (299 aa).

8 helical membrane passes run 33–53 (VGFLLLLWPTWWALWLAADGV), 56–76 (WWTLCVFTTGIWLTRSAGCVI), 105–125 (NALLMFGTLMLIAFGLVLTMN), 151–171 (LPQVYLGIAFGWGIPMAFAAI), 180–200 (WLLYVANILWTTAYDTWYAMV), 214–234 (AILFADLDLVVQGVLYTLMLL), 247–267 (HTYWISLISAVALIGYQFIIA), and 278–298 (AFMHNNWVGMTIFAGIALATT).

Belongs to the UbiA prenyltransferase family. It depends on Mg(2+) as a cofactor.

The protein resides in the cell inner membrane. The catalysed reaction is all-trans-octaprenyl diphosphate + 4-hydroxybenzoate = 4-hydroxy-3-(all-trans-octaprenyl)benzoate + diphosphate. It functions in the pathway cofactor biosynthesis; ubiquinone biosynthesis. Functionally, catalyzes the prenylation of para-hydroxybenzoate (PHB) with an all-trans polyprenyl group. Mediates the second step in the final reaction sequence of ubiquinone-8 (UQ-8) biosynthesis, which is the condensation of the polyisoprenoid side chain with PHB, generating the first membrane-bound Q intermediate 3-octaprenyl-4-hydroxybenzoate. The polypeptide is 4-hydroxybenzoate octaprenyltransferase (Xylella fastidiosa (strain M23)).